A 525-amino-acid chain; its full sequence is Tigger transposable element-derived protein 2 (525 aa).

The region spanning 1–52 (MLGKRKRVVLTIKDKLDIIKKLEEGNSFKKLSVLYGIGESTVRDIKKNKERI) is the HTH psq-type domain. 2 consecutive DNA-binding regions (H-T-H motif) follow at residues 28 to 48 (FKKL…IKKN) and 100 to 132 (TICA…FKQR). One can recognise an HTH CENPB-type domain in the interval 67 to 139 (KRKSMKSSTY…KQRHGIPKAA (73 aa)). One can recognise a DDE-1 domain in the interval 168–385 (LLPEQIYGAD…IRSNTITRAW (218 aa)).

Belongs to the tigger transposable element derived protein family.

Its subcellular location is the nucleus. The chain is Tigger transposable element-derived protein 2 (Tigd2) from Mus musculus (Mouse).